The primary structure comprises 319 residues: Large ribosomal subunit protein eL8 (319 aa).

At K87 the chain carries N6-acetyllysine. A Glycyl lysine isopeptide (Lys-Gly) (interchain with G-Cter in SUMO2) cross-link involves residue K101. K150 is modified (N6-acetyllysine; alternate). Residue K150 forms a Glycyl lysine isopeptide (Lys-Gly) (interchain with G-Cter in SUMO2); alternate linkage. Residue K178 forms a Glycyl lysine isopeptide (Lys-Gly) (interchain with G-Cter in SUMO2) linkage. An N6-acetyllysine modification is found at K270. A Glycyl lysine isopeptide (Lys-Gly) (interchain with G-Cter in SUMO2) cross-link involves residue K298.

Belongs to the eukaryotic ribosomal protein eL8 family. As to quaternary structure, component of the large ribosomal subunit. Interacts with CRY1. Interacts with DICER1, AGO2, TARBP2, MOV10 and EIF6; they form a large RNA-induced silencing complex (RISC).

It is found in the cytoplasm. Functionally, component of the large ribosomal subunit. The ribosome is a large ribonucleoprotein complex responsible for the synthesis of proteins in the cell. The sequence is that of Large ribosomal subunit protein eL8 (RPL7A) from Oryctolagus cuniculus (Rabbit).